Here is a 173-residue protein sequence, read N- to C-terminus: Probable lipoprotein EnvE (173 aa).

Residues 1 to 20 (MTLLSGKTTLVLCLSSILCG) form the signal peptide. Cysteine 21 carries the N-palmitoyl cysteine lipid modification. Cysteine 21 carries the S-diacylglycerol cysteine lipid modification.

The protein localises to the cell membrane. In Salmonella typhimurium (strain LT2 / SGSC1412 / ATCC 700720), this protein is Probable lipoprotein EnvE (envE).